The chain runs to 1271 residues: Protein flightless-1 homolog (1271 aa).

An N-acetylmethionine modification is found at methionine 1. An interaction with LRRFIP1 and LRRFIP2 region spans residues methionine 1–lysine 427. LRR repeat units follow at residues leucine 7–methionine 32, threonine 33–leucine 55, glutamine 56–leucine 78, serine 80–leucine 103, aspartate 104–alanine 126, lysine 127–asparagine 149, leucine 150–leucine 173, histidine 175–alanine 196, methionine 197–leucine 222, serine 223–leucine 245, serine 247–tryptophan 268, valine 269–leucine 291, lysine 293–leucine 316, threonine 317–cysteine 339, proline 340–threonine 363, and isoleucine 365–arginine 385. At lysine 21 the chain carries N6-acetyllysine. Position 406 is a phosphoserine (serine 406). Phosphoserine; by SGK3 is present on serine 436. Positions valine 495–glutamate 827 are interaction with ACTL6A. Gelsolin-like repeat units follow at residues phenylalanine 509–leucine 591, asparagine 629–tryptophan 703, and leucine 759–phenylalanine 831. Serine 860 carries the phosphoserine modification. The tract at residues lysine 951–glutamine 977 is disordered. Positions threonine 952–glutamate 967 are enriched in basic and acidic residues. Acidic residues predominate over residues glutamate 968–glutamine 977. Residues lysine 1183–phenylalanine 1256 form a Gelsolin-like 4 repeat.

As to quaternary structure, interacts with actin, ACTL6A and NCOA2. Interacts with CARM1. Interacts with LRRFIP1, LRRFIP2 and MYD88. Upon LPS stimulation, LRRFIP2 competes for MYD88-binding; LRRFIP1 constitutively blocks the interaction with MyD88, even in the absence of LPS. Interacts with the nuclear receptors ESR1 and THRB. Interacts with SGK3. Interacts (via the gelsolin-like region) with TMOD1 and TMOD3. Interacts with LMOD2, VCL, GSN and DES. Expressed in blastocyst.

It localises to the nucleus. It is found in the cytoplasm. Its subcellular location is the cytoskeleton. The protein resides in the microtubule organizing center. The protein localises to the centrosome. It localises to the cell junction. It is found in the focal adhesion. Its subcellular location is the cell projection. The protein resides in the podosome. Its function is as follows. Is a regulator of actin polymerization, required for proper myofibril organization and regulation of the length of sarcomeric thin filaments. It also plays a role in the assembly of cardiomyocyte cell adhesion complexes. Regulates cytoskeletal rearrangements involved in cytokinesis and cell migration, by inhibiting Rac1-dependent paxillin phosphorylation. May play a role as coactivator in transcriptional activation by hormone-activated nuclear receptors (NR) and acts in cooperation with NCOA2 and CARM1. Involved in estrogen hormone signaling. This chain is Protein flightless-1 homolog (Flii), found in Mus musculus (Mouse).